Here is a 412-residue protein sequence, read N- to C-terminus: Translation initiation factor 2 subunit gamma (412 aa).

Residues 7–203 form the tr-type G domain; that stretch reads QPEVNIGLVG…AIESEIPTPD (197 aa). Residues 16 to 23 are G1; the sequence is GHVDHGKT. Residues aspartate 19, threonine 23, glycine 44, and serine 46 each contribute to the Mg(2+) site. GTP is bound at residue 19–24; it reads DHGKTT. Positions 44 to 48 are G2; the sequence is GISIR. Positions 90–93 are G3; that stretch reads DAPG. GTP-binding positions include 146–149 and 181–183; these read NKVD and SAQ. The segment at 146–149 is G4; the sequence is NKVD. A G5 region spans residues 181–183; the sequence is SAQ.

Belongs to the TRAFAC class translation factor GTPase superfamily. Classic translation factor GTPase family. EIF2G subfamily. In terms of assembly, heterotrimer composed of an alpha, a beta and a gamma chain. The cofactor is Mg(2+).

It catalyses the reaction GTP + H2O = GDP + phosphate + H(+). Functionally, eIF-2 functions in the early steps of protein synthesis by forming a ternary complex with GTP and initiator tRNA. The chain is Translation initiation factor 2 subunit gamma from Halorubrum lacusprofundi (strain ATCC 49239 / DSM 5036 / JCM 8891 / ACAM 34).